Reading from the N-terminus, the 101-residue chain is Small ribosomal subunit protein uS14 (101 aa).

Belongs to the universal ribosomal protein uS14 family. As to quaternary structure, part of the 30S ribosomal subunit. Contacts proteins S3 and S10.

Functionally, binds 16S rRNA, required for the assembly of 30S particles and may also be responsible for determining the conformation of the 16S rRNA at the A site. The chain is Small ribosomal subunit protein uS14 from Alteromonas mediterranea (strain DSM 17117 / CIP 110805 / LMG 28347 / Deep ecotype).